Reading from the N-terminus, the 149-residue chain is Snake venom vascular endothelial growth factor toxin 2 (149 aa).

A signal peptide spans 1–24 (MAAYLLAVAILFCIQGWPSGTVQG). The residue at position 25 (Q25) is a Pyrrolidone carboxylic acid. 3 disulfide bridges follow: C38-C80, C69-C115, and C73-C117. Residues 118 to 149 (RPRSGRVNSGKRKRNPEEGGAESQVPLGLTSF) are disordered.

Belongs to the PDGF/VEGF growth factor family. Snake venom VEGF subfamily. Homodimer; disulfide-linked. Interacts with VEGF receptor-1 (FLT1) with a high affinity, whereas it binds to VEGF receptor-2 (KDR) with a low affinity. Does not bind VEGF receptor-3 (FLT4). Expressed by the venom gland.

Its subcellular location is the secreted. Its function is as follows. Snake venom VEGFs that may contribute to venom dispersion and prey subjugation by inducing vascular permeability and hypotension. This protein induces an increase in capillary permeability after intradermal injection, as well as a drastic hypotensive effect after intravenous injection. The hypotension is mediated by nitric oxide (NO), which is produced by VEGF-activated endothelium NO synthase. Also induces angiogenesis in vitro. Like other crotalid VEGFs, this protein interacts with VEGF receptor-1 (FLT1) with a high affinity, whereas it binds to VEGF receptor-2 (KDR) with a low affinity. The sequence is that of Snake venom vascular endothelial growth factor toxin 2 from Sistrurus catenatus edwardsii (Desert massasauga).